The chain runs to 293 residues: Undecaprenyl-diphosphatase (293 aa).

Helical transmembrane passes span Ile3–Pro23, Lys43–Phe63, Ile85–Ile105, Leu109–Ala129, Val203–Glu223, Ile238–Leu258, and Phe269–Ile289.

The protein belongs to the UppP family.

The protein localises to the cell inner membrane. The enzyme catalyses di-trans,octa-cis-undecaprenyl diphosphate + H2O = di-trans,octa-cis-undecaprenyl phosphate + phosphate + H(+). Catalyzes the dephosphorylation of undecaprenyl diphosphate (UPP). Confers resistance to bacitracin. This chain is Undecaprenyl-diphosphatase, found in Ralstonia pickettii (strain 12J).